The chain runs to 63 residues: Large ribosomal subunit protein bL28 (63 aa).

This sequence belongs to the bacterial ribosomal protein bL28 family.

This is Large ribosomal subunit protein bL28 from Desulfosudis oleivorans (strain DSM 6200 / JCM 39069 / Hxd3) (Desulfococcus oleovorans).